The chain runs to 272 residues: MEKYAVFGNPIAHSKSPFIHQQFAQQLHIDYSYDRVLAPVDDFLATLNAFFCEGARGANVTVPFKEDAFERADELTERASLAGAVNTLKRLDDGRLLGDNTDGIGLLSDLERLSFIKPGSRVLLIGAGGASRGVLLPLLSLDCAVTITNRTYSRAKDLATLFAHTGSISAVAMEDLEGHEFDLIINATSSGIAGDVPAIPASLVKAHVYFYDMFYQKGSTPFLSWCEDHGAKHMSDGLGMLVGQAAHAVLLWHGVLPAVEPVIEKLKQELLA.

Shikimate-binding positions include 14–16 (SKS) and threonine 61. The Proton acceptor role is filled by lysine 65. Position 77 (glutamate 77) interacts with NADP(+). Residues asparagine 86 and aspartate 102 each contribute to the shikimate site. Residues 126–130 (GAGGA), 149–154 (NRTYSR), and methionine 213 contribute to the NADP(+) site. Position 215 (tyrosine 215) interacts with shikimate. Glycine 237 is a binding site for NADP(+).

This sequence belongs to the shikimate dehydrogenase family. In terms of assembly, homodimer.

The catalysed reaction is shikimate + NADP(+) = 3-dehydroshikimate + NADPH + H(+). It participates in metabolic intermediate biosynthesis; chorismate biosynthesis; chorismate from D-erythrose 4-phosphate and phosphoenolpyruvate: step 4/7. Functionally, involved in the biosynthesis of the chorismate, which leads to the biosynthesis of aromatic amino acids. Catalyzes the reversible NADPH linked reduction of 3-dehydroshikimate (DHSA) to yield shikimate (SA). This chain is Shikimate dehydrogenase (NADP(+)), found in Enterobacter sp. (strain 638).